Here is a 310-residue protein sequence, read N- to C-terminus: Malate dehydrogenase (310 aa).

Residues 7 to 12 (GAGNVG) and aspartate 32 contribute to the NAD(+) site. Substrate-binding residues include arginine 81 and arginine 87. NAD(+) is bound by residues asparagine 94 and 117 to 119 (VSN). Positions 119 and 150 each coordinate substrate. Residue histidine 174 is the Proton acceptor of the active site.

Belongs to the LDH/MDH superfamily. MDH type 3 family.

The enzyme catalyses (S)-malate + NAD(+) = oxaloacetate + NADH + H(+). In terms of biological role, catalyzes the reversible oxidation of malate to oxaloacetate. This Chloroherpeton thalassium (strain ATCC 35110 / GB-78) protein is Malate dehydrogenase.